A 678-amino-acid chain; its full sequence is Glycine--tRNA ligase beta subunit (678 aa).

It belongs to the class-II aminoacyl-tRNA synthetase family. In terms of assembly, tetramer of two alpha and two beta subunits.

The protein resides in the cytoplasm. It carries out the reaction tRNA(Gly) + glycine + ATP = glycyl-tRNA(Gly) + AMP + diphosphate. The polypeptide is Glycine--tRNA ligase beta subunit (Streptococcus pneumoniae (strain Hungary19A-6)).